We begin with the raw amino-acid sequence, 218 residues long: MSEKYTLSLEPRAVVGKKVKRLRRSGILPATVYGKGIEPISVQVDARSFNAVYRRAGRTALVELHIAGRQPLAAFIHALQRHPVTRDIIHADFRAVDLSQEVEVAVPLHIEGESPLVESGEAVLNQVLNAIEIRALPSNIPAHLTVDISGLDAFDKSIHVRDLALPPGVTLATPGDELVVSLAHARAAEEEAPAAEETTAEPELVRERREPRAEEEEE.

Residues 185–218 (ARAAEEEAPAAEETTAEPELVRERREPRAEEEEE) are disordered. A compositionally biased stretch (acidic residues) spans 190–200 (EEAPAAEETTA). Residues 203 to 212 (ELVRERREPR) show a composition bias toward basic and acidic residues.

Belongs to the bacterial ribosomal protein bL25 family. CTC subfamily. Part of the 50S ribosomal subunit; part of the 5S rRNA/L5/L18/L25 subcomplex. Contacts the 5S rRNA. Binds to the 5S rRNA independently of L5 and L18.

This is one of the proteins that binds to the 5S RNA in the ribosome where it forms part of the central protuberance. The protein is Large ribosomal subunit protein bL25 of Roseiflexus castenholzii (strain DSM 13941 / HLO8).